The chain runs to 119 residues: Ribonuclease P protein component (119 aa).

It belongs to the RnpA family. Consists of a catalytic RNA component (M1 or rnpB) and a protein subunit.

It catalyses the reaction Endonucleolytic cleavage of RNA, removing 5'-extranucleotides from tRNA precursor.. Functionally, RNaseP catalyzes the removal of the 5'-leader sequence from pre-tRNA to produce the mature 5'-terminus. It can also cleave other RNA substrates such as 4.5S RNA. The protein component plays an auxiliary but essential role in vivo by binding to the 5'-leader sequence and broadening the substrate specificity of the ribozyme. This chain is Ribonuclease P protein component, found in Salmonella paratyphi A (strain AKU_12601).